The chain runs to 366 residues: tRNA/tmRNA (uracil-C(5))-methyltransferase (366 aa).

The S-adenosyl-L-methionine site is built by Gln-190, Tyr-218, Asn-223, Glu-239, and Asp-299. Cys-324 acts as the Nucleophile in catalysis. Glu-358 acts as the Proton acceptor in catalysis.

The protein belongs to the class I-like SAM-binding methyltransferase superfamily. RNA M5U methyltransferase family. TrmA subfamily.

It carries out the reaction uridine(54) in tRNA + S-adenosyl-L-methionine = 5-methyluridine(54) in tRNA + S-adenosyl-L-homocysteine + H(+). The enzyme catalyses uridine(341) in tmRNA + S-adenosyl-L-methionine = 5-methyluridine(341) in tmRNA + S-adenosyl-L-homocysteine + H(+). Dual-specificity methyltransferase that catalyzes the formation of 5-methyluridine at position 54 (m5U54) in all tRNAs, and that of position 341 (m5U341) in tmRNA (transfer-mRNA). This chain is tRNA/tmRNA (uracil-C(5))-methyltransferase, found in Shigella dysenteriae serotype 1 (strain Sd197).